A 264-amino-acid polypeptide reads, in one-letter code: Putative hydro-lyase RBAM_004300 (264 aa).

It belongs to the D-glutamate cyclase family.

In Bacillus velezensis (strain DSM 23117 / BGSC 10A6 / LMG 26770 / FZB42) (Bacillus amyloliquefaciens subsp. plantarum), this protein is Putative hydro-lyase RBAM_004300.